The sequence spans 212 residues: Methylthioribulose-1-phosphate dehydratase (212 aa).

Residues His97 and His99 each coordinate Zn(2+).

It belongs to the aldolase class II family. MtnB subfamily. Homotetramer. Zn(2+) serves as cofactor.

It carries out the reaction 5-(methylsulfanyl)-D-ribulose 1-phosphate = 5-methylsulfanyl-2,3-dioxopentyl phosphate + H2O. Its pathway is amino-acid biosynthesis; L-methionine biosynthesis via salvage pathway; L-methionine from S-methyl-5-thio-alpha-D-ribose 1-phosphate: step 2/6. In terms of biological role, catalyzes the dehydration of methylthioribulose-1-phosphate (MTRu-1-P) into 2,3-diketo-5-methylthiopentyl-1-phosphate (DK-MTP-1-P). This Bacillus cereus (strain G9842) protein is Methylthioribulose-1-phosphate dehydratase.